A 105-amino-acid chain; its full sequence is uncharacterized protein (105 aa).

2 helical membrane passes run 7–26 (VLSV…WLSL) and 30–52 (VDMT…LISI).

The protein resides in the cell membrane. This is an uncharacterized protein from Archaeoglobus fulgidus (strain ATCC 49558 / DSM 4304 / JCM 9628 / NBRC 100126 / VC-16).